Consider the following 663-residue polypeptide: Guanine nucleotide exchange factor subunit RGP1 (663 aa).

6 positions are modified to phosphoserine: Ser-351, Ser-354, Ser-357, Ser-363, Ser-364, and Ser-370. Residues 412 to 443 form a disordered region; the sequence is GKDEDSSDPEPNDSHFSNEMVTSAESSLRSDA. The segment covering 426–440 has biased composition (polar residues); it reads HFSNEMVTSAESSLR.

The protein belongs to the RGP1 family. In terms of assembly, forms a complex with RIC1.

The protein localises to the golgi apparatus. The RIC1-RGP1 complex acts as a guanine nucleotide exchange factor (GEF), which activates YPT6 by exchanging bound GDP for free GTP. It is thereby required for efficient fusion of endosome-derived vesicles with the Golgi. The RIC1-RGP1 participates in the recycling of SNC1, presumably by mediating fusion of endosomal vesicles with the Golgi compartment. In terms of biological role, required for proper mitotic growth. The polypeptide is Guanine nucleotide exchange factor subunit RGP1 (Saccharomyces cerevisiae (strain ATCC 204508 / S288c) (Baker's yeast)).